A 266-amino-acid chain; its full sequence is Gasdermin bGSDM (266 aa).

The next 4 beta stranded transmembrane spans lie at 65 to 81 (FSGQQLLQTDWSAGADL), 93 to 113 (EDKLKASLSGMKGLVLSFAYE), 162 to 181 (QFTVTIDCQREDQGKLEAAV), and 187 to 203 (AHASIERKQSNSFSLQT). The C-terminal region stretch occupies residues 248-266 (GEEDFSVQPLQAPSGLLKL).

Belongs to the bacterial gasdermin family. In terms of assembly, monomer. Forms large, homooligomeric ring-shaped pores when inserted in membranes.

It is found in the cytoplasm. Its subcellular location is the cell membrane. With respect to regulation, the full-length protein before cleavage is inactive: intramolecular interactions between the N-terminal domain and the C-terminal region mediate autoinhibition. The pyroptosis-like-inducing activity is carried by the released N-terminal domain (Gasdermin bGSDM, N-terminus). Precursor of a pore-forming protein involved in defense against bacteriophages. Cleavage of this precursor by its dedicated protease releases the active moiety (gasdermin bGSDM, N-terminus) which inserts into membranes, forming pores and triggering cell death. Expression of bGSDM and the neighboring protease gene (Ga0307981_100051430) is highly toxic in E.coli. In terms of biological role, pore-forming protein that causes membrane permeabilization via a pyroptosis-like activity. This is the active form which makes ring-like pores with an interior pore diameter of 130-190 Angstroms, when integrated in liposomes. The protein is Gasdermin bGSDM of Unknown prokaryotic organism.